The primary structure comprises 308 residues: Aspartate carbamoyltransferase catalytic subunit (308 aa).

Carbamoyl phosphate contacts are provided by Arg-49 and Thr-50. L-aspartate is bound at residue Lys-77. Positions 99, 127, and 130 each coordinate carbamoyl phosphate. L-aspartate is bound by residues Arg-160 and Arg-211. Residues Ala-252 and Pro-253 each contribute to the carbamoyl phosphate site.

Belongs to the aspartate/ornithine carbamoyltransferase superfamily. ATCase family. In terms of assembly, heterododecamer (2C3:3R2) of six catalytic PyrB chains organized as two trimers (C3), and six regulatory PyrI chains organized as three dimers (R2).

It carries out the reaction carbamoyl phosphate + L-aspartate = N-carbamoyl-L-aspartate + phosphate + H(+). Its pathway is pyrimidine metabolism; UMP biosynthesis via de novo pathway; (S)-dihydroorotate from bicarbonate: step 2/3. Functionally, catalyzes the condensation of carbamoyl phosphate and aspartate to form carbamoyl aspartate and inorganic phosphate, the committed step in the de novo pyrimidine nucleotide biosynthesis pathway. In Bacillus caldolyticus, this protein is Aspartate carbamoyltransferase catalytic subunit.